The sequence spans 326 residues: tRNA-dihydrouridine(20a/20b) synthase [NAD(P)+] (326 aa).

Residues 26 to 28 (PMV) and Gln79 contribute to the FMN site. Cys108 serves as the catalytic Proton donor. FMN is bound by residues Lys149, His177, 208–210 (NGD), and 232–233 (AR).

Belongs to the Dus family. Dus4 subfamily. The cofactor is FMN.

The protein resides in the mitochondrion. The enzyme catalyses 5,6-dihydrouridine(20a) in tRNA + NADP(+) = uridine(20a) in tRNA + NADPH + H(+). It carries out the reaction 5,6-dihydrouridine(20a) in tRNA + NAD(+) = uridine(20a) in tRNA + NADH + H(+). The catalysed reaction is 5,6-dihydrouridine(20b) in tRNA + NAD(+) = uridine(20b) in tRNA + NADH + H(+). It catalyses the reaction 5,6-dihydrouridine(20b) in tRNA + NADP(+) = uridine(20b) in tRNA + NADPH + H(+). The enzyme catalyses a 5,6-dihydrouridine in mRNA + NAD(+) = a uridine in mRNA + NADH + H(+). It carries out the reaction a 5,6-dihydrouridine in mRNA + NADP(+) = a uridine in mRNA + NADPH + H(+). Its function is as follows. Catalyzes the synthesis of dihydrouridine, a modified base found in the D-loop of most tRNAs. Also able to mediate dihydrouridylation of some mRNAs, thereby affecting their translation. This is tRNA-dihydrouridine(20a/20b) synthase [NAD(P)+] from Schizosaccharomyces pombe (strain 972 / ATCC 24843) (Fission yeast).